The chain runs to 569 residues: Proline--tRNA ligase (569 aa).

Belongs to the class-II aminoacyl-tRNA synthetase family. ProS type 1 subfamily. Homodimer.

It is found in the cytoplasm. It catalyses the reaction tRNA(Pro) + L-proline + ATP = L-prolyl-tRNA(Pro) + AMP + diphosphate. Its function is as follows. Catalyzes the attachment of proline to tRNA(Pro) in a two-step reaction: proline is first activated by ATP to form Pro-AMP and then transferred to the acceptor end of tRNA(Pro). As ProRS can inadvertently accommodate and process non-cognate amino acids such as alanine and cysteine, to avoid such errors it has two additional distinct editing activities against alanine. One activity is designated as 'pretransfer' editing and involves the tRNA(Pro)-independent hydrolysis of activated Ala-AMP. The other activity is designated 'posttransfer' editing and involves deacylation of mischarged Ala-tRNA(Pro). The misacylated Cys-tRNA(Pro) is not edited by ProRS. The sequence is that of Proline--tRNA ligase from Campylobacter jejuni subsp. jejuni serotype O:23/36 (strain 81-176).